The chain runs to 176 residues: dCTP deaminase (176 aa).

DCTP contacts are provided by residues 102 to 107 (RSTFAR) and Asp118. The active-site Proton donor/acceptor is Glu128. Residues Tyr160 and Gln167 each contribute to the dCTP site.

This sequence belongs to the dCTP deaminase family. In terms of assembly, homotrimer.

The catalysed reaction is dCTP + H2O + H(+) = dUTP + NH4(+). Its pathway is pyrimidine metabolism; dUMP biosynthesis; dUMP from dCTP (dUTP route): step 1/2. Functionally, catalyzes the deamination of dCTP to dUTP. The chain is dCTP deaminase from Hyperthermus butylicus (strain DSM 5456 / JCM 9403 / PLM1-5).